Reading from the N-terminus, the 148-residue chain is Ribonuclease 4 (148 aa).

An N-terminal signal peptide occupies residues 1–29 (MMDLQRTQSLLLLLVLTLLGLGLVQPSYG). Gln30 is modified (pyrrolidone carboxylic acid). 5 residues coordinate dUMP: Arg36, His41, Lys69, Asn72, and Thr73. The active-site Proton acceptor is the His41. 4 cysteine pairs are disulfide-bonded: Cys54–Cys110, Cys68–Cys121, Cys86–Cys136, and Cys93–Cys100. Catalysis depends on His145, which acts as the Proton donor. Residue Phe146 participates in dUMP binding.

The protein belongs to the pancreatic ribonuclease family. Expressed in the cortical tubules of the kidney (at protein level). Also expressed in the medullary tubules of the kidney.

The protein resides in the secreted. In terms of biological role, cleaves preferentially after uridine bases. Has antimicrobial activity against uropathogenic E.coli (UPEC). Probably contributes to urinary tract sterility. This Mus musculus (Mouse) protein is Ribonuclease 4 (Rnase4).